Reading from the N-terminus, the 207-residue chain is 5-amino-6-(5-phosphoribosylamino)uracil reductase (207 aa).

Ser-6 contributes to the substrate binding site. Trp-8 serves as a coordination point for NADP(+). Arg-22 contacts substrate. Asp-38 lines the NADP(+) pocket. Residues Leu-42 and Arg-45 each coordinate substrate. Ser-72 is a binding site for NADP(+). A substrate-binding site is contributed by Glu-137.

It belongs to the HTP reductase family.

It catalyses the reaction 5-amino-6-(5-phospho-D-ribitylamino)uracil + NADP(+) = 5-amino-6-(5-phospho-D-ribosylamino)uracil + NADPH + H(+). It participates in cofactor biosynthesis; riboflavin biosynthesis; 5-amino-6-(D-ribitylamino)uracil from GTP: step 3/4. The chain is 5-amino-6-(5-phosphoribosylamino)uracil reductase (ribD2) from Buchnera aphidicola subsp. Acyrthosiphon pisum (strain APS) (Acyrthosiphon pisum symbiotic bacterium).